The following is a 227-amino-acid chain: Esterase OVCA2 (227 aa).

A disordered region spans residues 44–68 (GPHPVPDPPGPEGARSDFGSCPPEE). Active-site charge relay system residues include S119, D179, and H206.

Belongs to the LovG family. Post-translationally, proteolytically degraded in response to RA and 4HPR treatment in a time- and dose-dependent manner in the promyelocytic leukemia cell line HL-60. As to expression, ubiquitously expressed.

It catalyses the reaction a carboxylic ester + H2O = an alcohol + a carboxylate + H(+). Functionally, exhibits ester hydrolase activity with a strong preference for long-chain alkyl ester substrates and high selectivity against a variety of short, branched, and substituted esters. Is able to hydrolyze ester bonds within a wide range of p-nitrophenyl derivatives (C2-C14) in vitro, with a strong preference toward substrates of &gt;8 carbons. This is Esterase OVCA2 from Homo sapiens (Human).